Here is a 235-residue protein sequence, read N- to C-terminus: MMIKLIVNADDFGLTEGTNYGIIDGHINGLVNSTTMMMNMPGTEHAVRLAKEYNLLGVGVHLVLTAGEPLLKDVPSLVGENGSFHKQSVVREGNINPEEVEREWTAQIEKFLSYGLTPTHLDSHHHVHGLPILHDVLERLAAKYNVPIRRCEEDRAVHPFSDVFYSDFYADGVTEDYFVKLKERVQGEQTVEIMVHPAYIDPELVKRSSYVMDRVKELRILTESELPEGIELVKF.

H61 and H124 together coordinate Mg(2+).

The protein belongs to the YdjC deacetylase family. Requires Mg(2+) as cofactor.

Its function is as follows. Probably catalyzes the deacetylation of acetylated carbohydrates an important step in the degradation of oligosaccharides. The protein is Carbohydrate deacetylase of Bacillus cereus (strain B4264).